The primary structure comprises 480 residues: Islet cell autoantigen 1 (480 aa).

The 204-residue stretch at 50-253 folds into the AH domain; sequence ASDADLDAKL…TSHTMAAIHE (204 aa). 2 stretches are compositionally biased toward basic and acidic residues: residues 276–293 and 306–321; these read LVEK…REAV and ENQH…EEGK. Disordered stretches follow at residues 276–338 and 400–421; these read LVEK…ACSG and LKEP…IGSA.

The protein resides in the cytoplasm. The protein localises to the cytosol. Its subcellular location is the golgi apparatus membrane. It localises to the cytoplasmic vesicle. It is found in the secretory vesicle membrane. The protein resides in the secretory vesicle. The protein localises to the synaptic vesicle membrane. In terms of biological role, may play a role in neurotransmitter secretion. This Rattus norvegicus (Rat) protein is Islet cell autoantigen 1.